A 135-amino-acid polypeptide reads, in one-letter code: Large ribosomal subunit protein bL19 (135 aa).

Belongs to the bacterial ribosomal protein bL19 family.

Functionally, this protein is located at the 30S-50S ribosomal subunit interface and may play a role in the structure and function of the aminoacyl-tRNA binding site. This is Large ribosomal subunit protein bL19 from Xanthomonas campestris pv. campestris (strain 8004).